A 707-amino-acid polypeptide reads, in one-letter code: MKITGVIVRIHKDRAIIRTDDNRLLAVKRHNDMMVGQIVSFDANEVHKVESKKYKYAASGKRIEKVQKTPKIKNFSRINNIKEFSRVDDIKNFSRVAATKETSQDSPQESKVENFSRVVDFSRVMNFSRVSNSKKNEIKNFSRISNIKNFSRIASIAAAFVLIFLFGRNVMLNNSSDSEYAYVSVDVNPSVEFTINSKHKVIVTSAINQDASEVLDGLELKEKDLKSALVMVLEKAESLGYISDDKNYVLVSMALNDKNKKTRDKREEKIDELKETIEQGIEALDNDTIVHRTVTVDLEERNKALENELSMGRYYLYLEAKEKGMDITIDEVKSSKISDLIEKIEDNTELAPTPTPVPPETPEPTPTPTASEATPSNSPVESKSPEAVPELGSREIEILGESVVLVTAYDENRKVVSQGSGFAVGTGLFATNYHLVKDGVVVKITAGDGKVYDVDGIVKYDKAKDLALLKTRVETGVNPLKLGTKKSLTKGSRIVAIGKANGAKNTVTKGSIKSLKVDGLTDAIELSASISKESTGGPVFDMKGNVVGITAYGISKQNVNAVIPADYVADWVKELSKHSFGNIRIVRKTLVFDSDFEFNFVVYKIIRALENEDAATYFGCMTDELYKDETRKNLEVLFTTYDLAYNIESINVVSKSEEQAKVSYVYTINKEAGPNFKNYRIIGECSLIKVDGTWKINDSEEKKEYIQ.

Over 1–149 (MKITGVIVRI…NFSRISNIKN (149 aa)) the chain is Cytoplasmic. The RsgI N-terminal anti-sigma domain maps to 3 to 50 (ITGVIVRIHKDRAIIRTDDNRLLAVKRHNDMMVGQIVSFDANEVHKVE). Residues 150–172 (FSRIASIAAAFVLIFLFGRNVML) form a helical membrane-spanning segment. Residues 173–707 (NNSSDSEYAY…DSEEKKEYIQ (535 aa)) are Extracellular-facing. The stretch at 256–283 (NDKNKKTRDKREEKIDELKETIEQGIEA) forms a coiled coil. The disordered stretch occupies residues 345–392 (EDNTELAPTPTPVPPETPEPTPTPTASEATPSNSPVESKSPEAVPELG). Residues 353 to 367 (TPTPVPPETPEPTPT) show a composition bias toward pro residues. Residues 368–379 (PTASEATPSNSP) show a composition bias toward low complexity.

It is found in the cell membrane. This chain is Anti-sigma-I factor RsgI9, found in Acetivibrio thermocellus (strain ATCC 27405 / DSM 1237 / JCM 9322 / NBRC 103400 / NCIMB 10682 / NRRL B-4536 / VPI 7372) (Clostridium thermocellum).